Reading from the N-terminus, the 60-residue chain is DNA-directed RNA polymerase subunit Rpo6 (60 aa).

The protein belongs to the archaeal Rpo6/eukaryotic RPB6 RNA polymerase subunit family. As to quaternary structure, part of the RNA polymerase complex.

Its subcellular location is the cytoplasm. The enzyme catalyses RNA(n) + a ribonucleoside 5'-triphosphate = RNA(n+1) + diphosphate. DNA-dependent RNA polymerase (RNAP) catalyzes the transcription of DNA into RNA using the four ribonucleoside triphosphates as substrates. The chain is DNA-directed RNA polymerase subunit Rpo6 from Halobacterium salinarum (strain ATCC 700922 / JCM 11081 / NRC-1) (Halobacterium halobium).